Consider the following 274-residue polypeptide: Orotidine 5'-phosphate decarboxylase (274 aa).

Catalysis depends on Lys95, which acts as the Proton donor.

It belongs to the OMP decarboxylase family. Type 2 subfamily.

The catalysed reaction is orotidine 5'-phosphate + H(+) = UMP + CO2. The protein operates within pyrimidine metabolism; UMP biosynthesis via de novo pathway; UMP from orotate: step 2/2. This chain is Orotidine 5'-phosphate decarboxylase (pyrF), found in Mycobacterium bovis (strain ATCC BAA-935 / AF2122/97).